We begin with the raw amino-acid sequence, 74 residues long: Cytochrome c oxidase subunit 2 (74 aa).

The Mitochondrial intermembrane segment spans residues 1–14 (MAHPMQLGFQDAAS). Residues 15–45 (PVMEELLHFHDHALMIVFLISTAVLYIIVVT) form a helical membrane-spanning segment. Topologically, residues 46–74 (VTTKLTDKYVLDAQEIEMVWTIMPAVVLI) are mitochondrial matrix.

The protein belongs to the cytochrome c oxidase subunit 2 family. As to quaternary structure, component of the cytochrome c oxidase (complex IV, CIV), a multisubunit enzyme composed of 14 subunits. The complex is composed of a catalytic core of 3 subunits MT-CO1, MT-CO2 and MT-CO3, encoded in the mitochondrial DNA, and 11 supernumerary subunits COX4I, COX5A, COX5B, COX6A, COX6B, COX6C, COX7A, COX7B, COX7C, COX8 and NDUFA4, which are encoded in the nuclear genome. The complex exists as a monomer or a dimer and forms supercomplexes (SCs) in the inner mitochondrial membrane with NADH-ubiquinone oxidoreductase (complex I, CI) and ubiquinol-cytochrome c oxidoreductase (cytochrome b-c1 complex, complex III, CIII), resulting in different assemblies (supercomplex SCI(1)III(2)IV(1) and megacomplex MCI(2)III(2)IV(2)). Found in a complex with TMEM177, COA6, COX18, COX20, SCO1 and SCO2. Interacts with TMEM177 in a COX20-dependent manner. Interacts with COX20. Interacts with COX16. Requires Cu cation as cofactor.

It is found in the mitochondrion inner membrane. It carries out the reaction 4 Fe(II)-[cytochrome c] + O2 + 8 H(+)(in) = 4 Fe(III)-[cytochrome c] + 2 H2O + 4 H(+)(out). Functionally, component of the cytochrome c oxidase, the last enzyme in the mitochondrial electron transport chain which drives oxidative phosphorylation. The respiratory chain contains 3 multisubunit complexes succinate dehydrogenase (complex II, CII), ubiquinol-cytochrome c oxidoreductase (cytochrome b-c1 complex, complex III, CIII) and cytochrome c oxidase (complex IV, CIV), that cooperate to transfer electrons derived from NADH and succinate to molecular oxygen, creating an electrochemical gradient over the inner membrane that drives transmembrane transport and the ATP synthase. Cytochrome c oxidase is the component of the respiratory chain that catalyzes the reduction of oxygen to water. Electrons originating from reduced cytochrome c in the intermembrane space (IMS) are transferred via the dinuclear copper A center (CU(A)) of subunit 2 and heme A of subunit 1 to the active site in subunit 1, a binuclear center (BNC) formed by heme A3 and copper B (CU(B)). The BNC reduces molecular oxygen to 2 water molecules using 4 electrons from cytochrome c in the IMS and 4 protons from the mitochondrial matrix. In Amia calva (Bowfin), this protein is Cytochrome c oxidase subunit 2 (mt-co2).